Consider the following 472-residue polypeptide: WASH complex subunit 1 (472 aa).

Residues 1–51 form a required for WASH complex assembly region; it reads MPQNRSVESQAYSLPLILPDLRREEAIHQITDTLQHLQTVSNDIFSRILQR. Disordered regions lie at residues 294–411 and 429–472; these read DRQD…GGDL and KVPA…DWES. The segment covering 301-334 has biased composition (pro residues); it reads LPPPPPPPPPPPPPPPPEPSALSPPAPPPPPLSI. The tract at residues 352 to 472 is VCA; the sequence is QGAPKEVVNP…GDGDEDDWES (121 aa). Residues 364–386 form the WH2 domain; it reads GRASLLESIRQAGGIGKANLRNV. A compositionally biased stretch (basic and acidic residues) spans 385-400; sequence NVKEKKLEKKKMKEQE.

The protein belongs to the WASH1 family. Component of the WASH complex.

It is found in the early endosome membrane. The protein resides in the recycling endosome membrane. In terms of biological role, acts as a nucleation-promoting factor at the surface of endosomes, where it recruits and activates the Arp2/3 complex to induce actin polymerization, playing a key role in the fission of tubules that serve as transport intermediates during endosome sorting. The polypeptide is WASH complex subunit 1 (Xenopus laevis (African clawed frog)).